The following is a 246-amino-acid chain: Probable transcriptional regulatory protein YebC (246 aa).

A disordered region spans residues 1–20 (MAGHSKWANTRHRKAAQDAK).

It belongs to the TACO1 family.

The protein resides in the cytoplasm. The chain is Probable transcriptional regulatory protein YebC from Salmonella typhimurium (strain LT2 / SGSC1412 / ATCC 700720).